A 99-amino-acid polypeptide reads, in one-letter code: Aspartyl/glutamyl-tRNA(Asn/Gln) amidotransferase subunit C (99 aa).

This sequence belongs to the GatC family. As to quaternary structure, heterotrimer of A, B and C subunits.

The catalysed reaction is L-glutamyl-tRNA(Gln) + L-glutamine + ATP + H2O = L-glutaminyl-tRNA(Gln) + L-glutamate + ADP + phosphate + H(+). It catalyses the reaction L-aspartyl-tRNA(Asn) + L-glutamine + ATP + H2O = L-asparaginyl-tRNA(Asn) + L-glutamate + ADP + phosphate + 2 H(+). In terms of biological role, allows the formation of correctly charged Asn-tRNA(Asn) or Gln-tRNA(Gln) through the transamidation of misacylated Asp-tRNA(Asn) or Glu-tRNA(Gln) in organisms which lack either or both of asparaginyl-tRNA or glutaminyl-tRNA synthetases. The reaction takes place in the presence of glutamine and ATP through an activated phospho-Asp-tRNA(Asn) or phospho-Glu-tRNA(Gln). The protein is Aspartyl/glutamyl-tRNA(Asn/Gln) amidotransferase subunit C of Cupriavidus necator (strain ATCC 17699 / DSM 428 / KCTC 22496 / NCIMB 10442 / H16 / Stanier 337) (Ralstonia eutropha).